The chain runs to 485 residues: Trigger factor (485 aa).

The PPIase FKBP-type domain maps to 169 to 261 (GDVAIVDFVG…LKELKEKELP (93 aa)).

The protein belongs to the FKBP-type PPIase family. Tig subfamily.

Its subcellular location is the cytoplasm. It catalyses the reaction [protein]-peptidylproline (omega=180) = [protein]-peptidylproline (omega=0). In terms of biological role, involved in protein export. Acts as a chaperone by maintaining the newly synthesized protein in an open conformation. Functions as a peptidyl-prolyl cis-trans isomerase. In Trichodesmium erythraeum (strain IMS101), this protein is Trigger factor.